A 147-amino-acid polypeptide reads, in one-letter code: Protein LOL4 (147 aa).

Putative zinc finger regions lie at residues 4–34 (QLIC…LTAV), 44–74 (ELIC…LNST), and 82–112 (HLTC…VNHV).

It is found in the nucleus. Its function is as follows. Putative zinc finger that may be involved in programmed cell death and defense response. The sequence is that of Protein LOL4 (LOL4) from Oryza sativa subsp. japonica (Rice).